We begin with the raw amino-acid sequence, 230 residues long: Orotidine 5'-phosphate decarboxylase (230 aa).

Substrate is bound by residues Asp-10, Lys-32, 59-68 (DLKYHDIPNT), Thr-119, Arg-180, Gln-189, Gly-209, and Arg-210. Residue Lys-61 is the Proton donor of the active site.

This sequence belongs to the OMP decarboxylase family. Type 1 subfamily. Homodimer.

The enzyme catalyses orotidine 5'-phosphate + H(+) = UMP + CO2. It participates in pyrimidine metabolism; UMP biosynthesis via de novo pathway; UMP from orotate: step 2/2. In terms of biological role, catalyzes the decarboxylation of orotidine 5'-monophosphate (OMP) to uridine 5'-monophosphate (UMP). The sequence is that of Orotidine 5'-phosphate decarboxylase from Glaesserella parasuis serovar 5 (strain SH0165) (Haemophilus parasuis).